The sequence spans 469 residues: Glutamate--tRNA ligase 2 (469 aa).

Positions 10–20 (PSPTGYLHIGG) match the 'HIGH' region motif. Zn(2+)-binding residues include Cys-99, Cys-101, Cys-126, and Asp-128. Residues 237–241 (RLSKR) carry the 'KMSKS' region motif. Residue Lys-240 participates in ATP binding.

The protein belongs to the class-I aminoacyl-tRNA synthetase family. Glutamate--tRNA ligase type 1 subfamily. Monomer. Zn(2+) is required as a cofactor.

The protein resides in the cytoplasm. It catalyses the reaction tRNA(Glu) + L-glutamate + ATP = L-glutamyl-tRNA(Glu) + AMP + diphosphate. Its function is as follows. Catalyzes the attachment of glutamate to tRNA(Glu) in a two-step reaction: glutamate is first activated by ATP to form Glu-AMP and then transferred to the acceptor end of tRNA(Glu). This is Glutamate--tRNA ligase 2 from Coxiella burnetii (strain CbuG_Q212) (Coxiella burnetii (strain Q212)).